The primary structure comprises 358 residues: Carbohydrate sulfotransferase 10 (358 aa).

Residues 1 to 6 (MHHQWL) lie on the Cytoplasmic side of the membrane. A helical; Signal-anchor for type II membrane protein membrane pass occupies residues 7-27 (LLAACFWVIFMFMVASKFITL). At 28–358 (TFKDPDGYGA…GYRVPDFLLN (331 aa)) the chain is on the lumenal side. N-linked (GlcNAc...) asparagine glycosylation occurs at asparagine 101. 3'-phosphoadenylyl sulfate is bound by residues 129-135 (PKVGNTQ) and 191-199 (RDPFERLIS). The N-linked (GlcNAc...) asparagine glycan is linked to asparagine 318.

The protein belongs to the sulfotransferase 2 family. Predominantly expressed in hypertrophic, prehypertrophic and proliferative chondrocytes at E12 but is down-regulated in epiphyseal chondrocytes.

The protein resides in the golgi apparatus membrane. Catalyzes the transfer of sulfate to position 3 of terminal glucuronic acid of both protein- and lipid-linked oligosaccharides. Participates in biosynthesis of HNK-1 carbohydrate structure, a sulfated glucuronyl-lactosaminyl residue carried by many neural recognition molecules, which is involved in cell interactions during ontogenetic development and in synaptic plasticity in the adult. This is Carbohydrate sulfotransferase 10 (CHST10) from Gallus gallus (Chicken).